Here is a 401-residue protein sequence, read N- to C-terminus: Argininosuccinate synthase (401 aa).

Ala10 to Ser18 contacts ATP. Tyr89 provides a ligand contact to L-citrulline. Gly119 lines the ATP pocket. Thr121, Asn125, and Asp126 together coordinate L-aspartate. Asn125 is an L-citrulline binding site. 5 residues coordinate L-citrulline: Arg129, Ser177, Ser186, Glu262, and Tyr274.

It belongs to the argininosuccinate synthase family. Type 1 subfamily. Homotetramer.

It is found in the cytoplasm. The catalysed reaction is L-citrulline + L-aspartate + ATP = 2-(N(omega)-L-arginino)succinate + AMP + diphosphate + H(+). The protein operates within amino-acid biosynthesis; L-arginine biosynthesis; L-arginine from L-ornithine and carbamoyl phosphate: step 2/3. The sequence is that of Argininosuccinate synthase from Thermosynechococcus vestitus (strain NIES-2133 / IAM M-273 / BP-1).